The sequence spans 57 residues: Large ribosomal subunit protein bL32c (57 aa).

Positions 1–21 (MAVPKKRTSKSKKNLRKNTWK) are disordered.

This sequence belongs to the bacterial ribosomal protein bL32 family.

Its subcellular location is the plastid. It localises to the chloroplast. The protein is Large ribosomal subunit protein bL32c of Stigeoclonium helveticum (Green alga).